A 417-amino-acid polypeptide reads, in one-letter code: Gamma-glutamyl phosphate reductase (417 aa).

This sequence belongs to the gamma-glutamyl phosphate reductase family.

The protein resides in the cytoplasm. It carries out the reaction L-glutamate 5-semialdehyde + phosphate + NADP(+) = L-glutamyl 5-phosphate + NADPH + H(+). It participates in amino-acid biosynthesis; L-proline biosynthesis; L-glutamate 5-semialdehyde from L-glutamate: step 2/2. Functionally, catalyzes the NADPH-dependent reduction of L-glutamate 5-phosphate into L-glutamate 5-semialdehyde and phosphate. The product spontaneously undergoes cyclization to form 1-pyrroline-5-carboxylate. This is Gamma-glutamyl phosphate reductase from Cronobacter sakazakii (strain ATCC BAA-894) (Enterobacter sakazakii).